The primary structure comprises 163 residues: Nucleotide-binding protein NT01EI_1072 (163 aa).

This sequence belongs to the YajQ family.

Nucleotide-binding protein. The protein is Nucleotide-binding protein NT01EI_1072 of Edwardsiella ictaluri (strain 93-146).